A 189-amino-acid polypeptide reads, in one-letter code: Small ribosomal subunit protein uS5 (189 aa).

The 64-residue stretch at 22-85 folds into the S5 DRBM domain; sequence FVDKLVAINR…EAAKRDLIFV (64 aa).

This sequence belongs to the universal ribosomal protein uS5 family. As to quaternary structure, part of the 30S ribosomal subunit. Contacts proteins S4 and S8.

Functionally, with S4 and S12 plays an important role in translational accuracy. In terms of biological role, located at the back of the 30S subunit body where it stabilizes the conformation of the head with respect to the body. This Sinorhizobium fredii (strain NBRC 101917 / NGR234) protein is Small ribosomal subunit protein uS5.